An 862-amino-acid polypeptide reads, in one-letter code: MLSIAHKIFGSANSRIIKSFYKVVQHINAIEHEFQLLSNEALKNKTIEFKEELKNGKTLDDILVPAFAVVREASKRVLNMRHFDVQLIGGMVLHKGMISEMKTGEGKTLVATLAAYLNALEGKGVHIVTVNDYLAKRDAEWMGELYDALGITVGCILTDTNDLERKNAYQCDILYSTNNNLGFDYLRDNMKFSRSEMVQRGFNYAIVDEVDSILIDEARTPLIISGQVDQDIKMYKKIDNLIYELVEEDYELEEKSKNIFLTEAGTTKIENLLTKHNLIPSNTSLYDIDNIIIMHYIIQALRAHKIFALDKDYIIKNGNIVIIDEFTGRMMDGRRYSDGLHQALEAKEKLNINSENQTLASTTFQNYFRMYTKLSGMTGTAATESEEFLGIYNLQVVQIPTNIPVQRIDLNDDIYCTEEEKFSAVIKFISECHQKLQPVLVGTVSIEKSEMLSKLLTQNKLKHSVLNARYHEQEAYIIAQAGIPGTITIATNMAGRGTDIQLGGNLKMLAKTALANTTDKEAIEIKYKQLSEKVKKDKEIAIQAGGLCVIGTERHESRRIDNQLRGRSGRQGDPGLSKFFLSLEDDLLRIFGSDKIKGVLKKLGMKKDEAIQHTWISRSIEKAQHKVESRNYDIRKSLLKFDNVINEQRKVVFDQRNRILDNDSYDISIIYRDLNSEIVNSIIHDKYYNLDDETYKILSSEFTRIYALTLDYSIISELESKEKVIEYLNKIVDEHFTQKIEEFKSRDQKLWDYAVKKVMIMSLDYLWRDHLAALDSLKCGINLRSIAQKDPLNEFKAEAFSMLENMMNKFYELITQRLSHLRFDIELSETQIPEYNINHTKISRNEKCPCGSGKKFKHCHGM.

ATP-binding positions include Q86, G104–T108, and D499. Zn(2+)-binding residues include C848, C850, C859, and H860.

The protein belongs to the SecA family. Monomer and homodimer. Part of the essential Sec protein translocation apparatus which comprises SecA, SecYEG and auxiliary proteins SecDF-YajC and YidC. Zn(2+) serves as cofactor.

Its subcellular location is the cell inner membrane. It localises to the cytoplasm. The enzyme catalyses ATP + H2O + cellular proteinSide 1 = ADP + phosphate + cellular proteinSide 2.. Its function is as follows. Part of the Sec protein translocase complex. Interacts with the SecYEG preprotein conducting channel. Has a central role in coupling the hydrolysis of ATP to the transfer of proteins into and across the cell membrane, serving both as a receptor for the preprotein-SecB complex and as an ATP-driven molecular motor driving the stepwise translocation of polypeptide chains across the membrane. This chain is Protein translocase subunit SecA, found in Ehrlichia canis (strain Jake).